The chain runs to 67 residues: Bowman-Birk type proteinase inhibitor A6 (67 aa).

Intrachain disulfides connect C9–C66, C10–C29, C13–C62, C16–C27, C36–C43, and C40–C54.

This sequence belongs to the Bowman-Birk serine protease inhibitor family. Expressed in bulb (at protein level).

Functionally, serine protease inhibitor. Strongly inhibits trypsin (Ki = 4 nM) and elastase (Ki = 4.8 nM). Also inhibits chymotrypsin with a Ki of 22 nM. Does not inhibit bacterial subtilisin. The protein is Bowman-Birk type proteinase inhibitor A6 of Hyacinthus orientalis (Common hyacinth).